Here is a 55-residue protein sequence, read N- to C-terminus: Large ribosomal subunit protein bL33 (55 aa).

The protein belongs to the bacterial ribosomal protein bL33 family.

The chain is Large ribosomal subunit protein bL33 from Renibacterium salmoninarum (strain ATCC 33209 / DSM 20767 / JCM 11484 / NBRC 15589 / NCIMB 2235).